We begin with the raw amino-acid sequence, 227 residues long: Cytochrome c oxidase subunit 2 (227 aa).

Over 1 to 14 (MAYPFQLGFQDATS) the chain is Mitochondrial intermembrane. A helical transmembrane segment spans residues 15–45 (PIMEELLHFHDHTLMIVFLISSLVLYIISLM). Over 46–59 (LTTKLTHTSTMDAQ) the chain is Mitochondrial matrix. Residues 60–87 (EVETIWTILPAIILILIALPSLRILYMM) traverse the membrane as a helical segment. Over 88–227 (DEINNPSLTV…YFEKWSASML (140 aa)) the chain is Mitochondrial intermembrane. Positions 161, 196, 198, 200, 204, and 207 each coordinate Cu cation. Mg(2+) is bound at residue Glu-198. Phosphotyrosine is present on Tyr-218.

This sequence belongs to the cytochrome c oxidase subunit 2 family. Component of the cytochrome c oxidase (complex IV, CIV), a multisubunit enzyme composed of 14 subunits. The complex is composed of a catalytic core of 3 subunits MT-CO1, MT-CO2 and MT-CO3, encoded in the mitochondrial DNA, and 11 supernumerary subunits COX4I, COX5A, COX5B, COX6A, COX6B, COX6C, COX7A, COX7B, COX7C, COX8 and NDUFA4, which are encoded in the nuclear genome. The complex exists as a monomer or a dimer and forms supercomplexes (SCs) in the inner mitochondrial membrane with NADH-ubiquinone oxidoreductase (complex I, CI) and ubiquinol-cytochrome c oxidoreductase (cytochrome b-c1 complex, complex III, CIII), resulting in different assemblies (supercomplex SCI(1)III(2)IV(1) and megacomplex MCI(2)III(2)IV(2)). Found in a complex with TMEM177, COA6, COX18, COX20, SCO1 and SCO2. Interacts with TMEM177 in a COX20-dependent manner. Interacts with COX20. Interacts with COX16. It depends on Cu cation as a cofactor.

Its subcellular location is the mitochondrion inner membrane. The enzyme catalyses 4 Fe(II)-[cytochrome c] + O2 + 8 H(+)(in) = 4 Fe(III)-[cytochrome c] + 2 H2O + 4 H(+)(out). Its function is as follows. Component of the cytochrome c oxidase, the last enzyme in the mitochondrial electron transport chain which drives oxidative phosphorylation. The respiratory chain contains 3 multisubunit complexes succinate dehydrogenase (complex II, CII), ubiquinol-cytochrome c oxidoreductase (cytochrome b-c1 complex, complex III, CIII) and cytochrome c oxidase (complex IV, CIV), that cooperate to transfer electrons derived from NADH and succinate to molecular oxygen, creating an electrochemical gradient over the inner membrane that drives transmembrane transport and the ATP synthase. Cytochrome c oxidase is the component of the respiratory chain that catalyzes the reduction of oxygen to water. Electrons originating from reduced cytochrome c in the intermembrane space (IMS) are transferred via the dinuclear copper A center (CU(A)) of subunit 2 and heme A of subunit 1 to the active site in subunit 1, a binuclear center (BNC) formed by heme A3 and copper B (CU(B)). The BNC reduces molecular oxygen to 2 water molecules using 4 electrons from cytochrome c in the IMS and 4 protons from the mitochondrial matrix. The sequence is that of Cytochrome c oxidase subunit 2 (MT-CO2) from Felis catus (Cat).